The following is a 363-amino-acid chain: Uroporphyrinogen decarboxylase (363 aa).

Substrate is bound by residues 36 to 40 (RQAGR), aspartate 85, tyrosine 160, serine 215, and histidine 339.

This sequence belongs to the uroporphyrinogen decarboxylase family. Homodimer.

The protein localises to the cytoplasm. The catalysed reaction is uroporphyrinogen III + 4 H(+) = coproporphyrinogen III + 4 CO2. It participates in porphyrin-containing compound metabolism; protoporphyrin-IX biosynthesis; coproporphyrinogen-III from 5-aminolevulinate: step 4/4. In terms of biological role, catalyzes the decarboxylation of four acetate groups of uroporphyrinogen-III to yield coproporphyrinogen-III. The sequence is that of Uroporphyrinogen decarboxylase from Saccharopolyspora erythraea (strain ATCC 11635 / DSM 40517 / JCM 4748 / NBRC 13426 / NCIMB 8594 / NRRL 2338).